Reading from the N-terminus, the 244-residue chain is Putative quercetin 2,3-dioxygenase Mb0187c (244 aa).

4 residues coordinate a divalent metal cation: His60, His62, His104, and Glu106.

The protein belongs to the pirin family. It depends on a divalent metal cation as a cofactor.

It catalyses the reaction quercetin + O2 = 2-(3,4-dihydroxybenzoyloxy)-4,6-dihydroxybenzoate + CO. It participates in flavonoid metabolism; quercetin degradation. Putative quercetin 2,3-dioxygenase. This chain is Putative quercetin 2,3-dioxygenase Mb0187c, found in Mycobacterium bovis (strain ATCC BAA-935 / AF2122/97).